Here is a 354-residue protein sequence, read N- to C-terminus: Uroporphyrinogen decarboxylase (354 aa).

Substrate is bound by residues 27–31 (RQAGR), Asp-77, Tyr-154, Thr-209, and His-327.

Belongs to the uroporphyrinogen decarboxylase family. Homodimer.

The protein resides in the cytoplasm. It catalyses the reaction uroporphyrinogen III + 4 H(+) = coproporphyrinogen III + 4 CO2. Its pathway is porphyrin-containing compound metabolism; protoporphyrin-IX biosynthesis; coproporphyrinogen-III from 5-aminolevulinate: step 4/4. Functionally, catalyzes the decarboxylation of four acetate groups of uroporphyrinogen-III to yield coproporphyrinogen-III. This Salmonella schwarzengrund (strain CVM19633) protein is Uroporphyrinogen decarboxylase.